The sequence spans 364 residues: Putative galactoside 2-alpha-L-fucosyltransferase svh-11 (364 aa).

Residues 1 to 19 (MRLFHFLKFLTINNFSRYC) are Cytoplasmic-facing. The helical; Signal-anchor for type II membrane protein transmembrane segment at 20-42 (LKIVKVHIIWITIICIIYFNWRF) threads the bilayer. Residues 43-364 (KKLDFMAIPY…SANSFTVVRS (322 aa)) lie on the Lumenal side of the membrane. N-linked (GlcNAc...) asparagine glycosylation is found at Asn-60 and Asn-128.

It belongs to the glycosyltransferase 11 family.

It localises to the golgi apparatus. It is found in the golgi stack membrane. In terms of biological role, mediates the transfer of fucose to the terminal galactose on glycan chains of cell surface glycoproteins and glycolipids. Required for axon regeneration after injury. This is Putative galactoside 2-alpha-L-fucosyltransferase svh-11 from Caenorhabditis elegans.